Reading from the N-terminus, the 243-residue chain is Aspartate/glutamate leucyltransferase (243 aa).

Belongs to the R-transferase family. Bpt subfamily.

Its subcellular location is the cytoplasm. The catalysed reaction is N-terminal L-glutamyl-[protein] + L-leucyl-tRNA(Leu) = N-terminal L-leucyl-L-glutamyl-[protein] + tRNA(Leu) + H(+). It catalyses the reaction N-terminal L-aspartyl-[protein] + L-leucyl-tRNA(Leu) = N-terminal L-leucyl-L-aspartyl-[protein] + tRNA(Leu) + H(+). In terms of biological role, functions in the N-end rule pathway of protein degradation where it conjugates Leu from its aminoacyl-tRNA to the N-termini of proteins containing an N-terminal aspartate or glutamate. This Teredinibacter turnerae (strain ATCC 39867 / T7901) protein is Aspartate/glutamate leucyltransferase.